Consider the following 293-residue polypeptide: Ribosomal RNA small subunit methyltransferase H (293 aa).

S-adenosyl-L-methionine-binding positions include Gly32 to His34, Asp51, Phe78, Asp99, and Gln106. Residues Asp274 to Leu293 form a disordered region.

Belongs to the methyltransferase superfamily. RsmH family.

It localises to the cytoplasm. The catalysed reaction is cytidine(1402) in 16S rRNA + S-adenosyl-L-methionine = N(4)-methylcytidine(1402) in 16S rRNA + S-adenosyl-L-homocysteine + H(+). Its function is as follows. Specifically methylates the N4 position of cytidine in position 1402 (C1402) of 16S rRNA. This chain is Ribosomal RNA small subunit methyltransferase H, found in Sulfurihydrogenibium azorense (strain DSM 15241 / OCM 825 / Az-Fu1).